We begin with the raw amino-acid sequence, 500 residues long: L-arabinose isomerase (500 aa).

E306, E333, H350, and H450 together coordinate Mn(2+).

The protein belongs to the arabinose isomerase family. As to quaternary structure, homohexamer. Requires Mn(2+) as cofactor.

The catalysed reaction is beta-L-arabinopyranose = L-ribulose. Its pathway is carbohydrate degradation; L-arabinose degradation via L-ribulose; D-xylulose 5-phosphate from L-arabinose (bacterial route): step 1/3. Its function is as follows. Catalyzes the conversion of L-arabinose to L-ribulose. This is L-arabinose isomerase from Escherichia fergusonii (strain ATCC 35469 / DSM 13698 / CCUG 18766 / IAM 14443 / JCM 21226 / LMG 7866 / NBRC 102419 / NCTC 12128 / CDC 0568-73).